The primary structure comprises 89 residues: Putative regulatory protein MAE_11840 (89 aa).

The protein belongs to the RemA family.

The protein is Putative regulatory protein MAE_11840 of Microcystis aeruginosa (strain NIES-843 / IAM M-2473).